The chain runs to 274 residues: Bis(5'-nucleosyl)-tetraphosphatase, symmetrical (274 aa).

The protein belongs to the Ap4A hydrolase family.

The catalysed reaction is P(1),P(4)-bis(5'-adenosyl) tetraphosphate + H2O = 2 ADP + 2 H(+). Functionally, hydrolyzes diadenosine 5',5'''-P1,P4-tetraphosphate to yield ADP. This chain is Bis(5'-nucleosyl)-tetraphosphatase, symmetrical (apaH), found in Buchnera aphidicola subsp. Acyrthosiphon pisum (strain APS) (Acyrthosiphon pisum symbiotic bacterium).